A 419-amino-acid polypeptide reads, in one-letter code: uncharacterized protein (419 aa).

The next 7 helical transmembrane spans lie at 16 to 36 (IMAK…LVVT), 186 to 206 (LVYI…SMIA), 235 to 255 (LLGI…AGSL), 283 to 303 (VIYA…LAAF), 318 to 338 (ITPM…GLNA), 340 to 360 (DAGF…IMFL), and 369 to 389 (FWQA…LAVI).

To M.jannaschii MJ1024.

It localises to the cell membrane. This is an uncharacterized protein from Bacillus subtilis (strain 168).